The following is a 333-amino-acid chain: Anthranilate phosphoribosyltransferase (333 aa).

Residues G81, 84–85, T89, 91–94, 109–117, and S121 each bind 5-phospho-alpha-D-ribose 1-diphosphate; these read GD, NIST, and KHGNRSVSS. Anthranilate is bound at residue G81. S93 contributes to the Mg(2+) binding site. N112 lines the anthranilate pocket. R167 is an anthranilate binding site. Mg(2+) is bound by residues D225 and E226.

The protein belongs to the anthranilate phosphoribosyltransferase family. In terms of assembly, homodimer. It depends on Mg(2+) as a cofactor.

It catalyses the reaction N-(5-phospho-beta-D-ribosyl)anthranilate + diphosphate = 5-phospho-alpha-D-ribose 1-diphosphate + anthranilate. Its pathway is amino-acid biosynthesis; L-tryptophan biosynthesis; L-tryptophan from chorismate: step 2/5. Catalyzes the transfer of the phosphoribosyl group of 5-phosphorylribose-1-pyrophosphate (PRPP) to anthranilate to yield N-(5'-phosphoribosyl)-anthranilate (PRA). The polypeptide is Anthranilate phosphoribosyltransferase (Glaesserella parasuis serovar 5 (strain SH0165) (Haemophilus parasuis)).